Consider the following 220-residue polypeptide: Large ribosomal subunit protein uL6c (220 aa).

The N-terminal 38 residues, 1-38 (MSLPLPSHMKSVFLGMKVEISTSVPVTRIGFWRKSVDC), are a transit peptide targeting the chloroplast.

In terms of assembly, component of the chloroplast large ribosomal subunit (LSU). Mature 70S chloroplast ribosomes of higher plants consist of a small (30S) and a large (50S) subunit. The 30S small subunit contains 1 molecule of ribosomal RNA (16S rRNA) and 24 different proteins. The 50S large subunit contains 3 rRNA molecules (23S, 5S and 4.5S rRNA) and 33 different proteins.

It is found in the plastid. It localises to the chloroplast. In terms of biological role, component of the chloroplast ribosome (chloro-ribosome), a dedicated translation machinery responsible for the synthesis of chloroplast genome-encoded proteins, including proteins of the transcription and translation machinery and components of the photosynthetic apparatus. In Spinacia oleracea (Spinach), this protein is Large ribosomal subunit protein uL6c (RPL6).